The primary structure comprises 471 residues: ATP synthase subunit beta (471 aa).

159–166 (GGAGVGKT) serves as a coordination point for ATP.

The protein belongs to the ATPase alpha/beta chains family. In terms of assembly, F-type ATPases have 2 components, CF(1) - the catalytic core - and CF(0) - the membrane proton channel. CF(1) has five subunits: alpha(3), beta(3), gamma(1), delta(1), epsilon(1). CF(0) has four main subunits: a(1), b(1), b'(1) and c(9-12).

The protein resides in the cell membrane. The catalysed reaction is ATP + H2O + 4 H(+)(in) = ADP + phosphate + 5 H(+)(out). Produces ATP from ADP in the presence of a proton gradient across the membrane. The catalytic sites are hosted primarily by the beta subunits. In Heliobacterium modesticaldum (strain ATCC 51547 / Ice1), this protein is ATP synthase subunit beta.